Here is a 637-residue protein sequence, read N- to C-terminus: Keratin, type II cytoskeletal 1 (637 aa).

The segment at 1–187 (MSLQCSSRSL…DPQIQKVKSQ (187 aa)) is head. R12 is modified (omega-N-methylarginine). Residues S21 and S24 each carry the phosphoserine modification. R49 carries the post-translational modification Omega-N-methylarginine. S67 is modified (phosphoserine). Positions 180-328 (QIQKVKSQER…DIDFFSALYQ (149 aa)) form a coiled coil. Residues 188-223 (EREQIKSLNDKFASFIDKVRFLEQQNQVLQTKWELL) are coil 1A. Positions 188–501 (EREQIKSLND…KLLEGEEIRM (314 aa)) constitute an IF rod domain. Residues 224–243 (QQVDTTTRTQNLDPFFENYI) are linker 1. The tract at residues 244 to 334 (SILRRKVDSL…ALYQMEMSQM (91 aa)) is coil 1B. K284 is modified (N6,N6-dimethyllysine). The interval 335 to 358 (QTQISETNVVLSMDNNRSLDLDGI) is linker 12. The residue at position 352 (S352) is a Phosphoserine. The segment at 359 to 497 (ISEVKAQYDS…ATYKKLLEGE (139 aa)) is coil 2. Residues 397-483 (DSVRNTKMEI…QELMNTKLAL (87 aa)) are a coiled coil. Positions 498–637 (EIRMSGECTP…VSTSYSRGTK (140 aa)) are tail. 2 disordered regions span residues 505 to 533 (CTPNVSVSVSTSHTSMSGSSSRGGGSGGG) and 563 to 637 (YGGG…RGTK). Low complexity predominate over residues 509-524 (VSVSVSTSHTSMSGSS). Omega-N-methylarginine is present on residues R526, R585, and R607. Residues 563 to 618 (YGGGSGGGSYGGGSGGGSSGSHRGGSGGGGGSSGGSYGGSSGGGRGGSSSGGGGVK) are compositionally biased toward gly residues. The span at 624 to 637 (TVKFVSTSYSRGTK) shows a compositional bias: polar residues.

It belongs to the intermediate filament family. Heterotetramer of two type I and two type II keratins. Heterodimer with KRT10. Two heterodimers of KRT1 and KRT10 form a heterotetramer. Forms a heterodimer with KRT14; the interaction is more abundant in the absence of KRT5. Interacts with PLEC isoform 1C, when in a heterodimer with KRT10. Interacts with ITGB1 in the presence of RACK1 and SRC, and with RACK1. Interacts with C1QBP; the association represents a cell surface kininogen receptor. Interacts with EPPK1; interaction is dependent of higher-order structure of intermediate filament. Undergoes deimination of some arginine residues (citrullination). In terms of tissue distribution, expressed in the infundibular regions of the ear, the interfollicular epidermis of the back, in the interscale regions containing hair follicles in the tail, and in the soles of the footpads (at protein level).

It localises to the cell membrane. The protein localises to the cytoplasm. In terms of biological role, may regulate the activity of kinases such as PKC and SRC via binding to integrin beta-1 (ITB1) and the receptor of activated protein C kinase 1 (RACK1). In complex with C1QBP is a high affinity receptor for kininogen-1/HMWK. In Mus musculus (Mouse), this protein is Keratin, type II cytoskeletal 1 (Krt1).